The primary structure comprises 310 residues: Quinolinate synthase (310 aa).

Positions 27 and 44 each coordinate iminosuccinate. Residue cysteine 89 participates in [4Fe-4S] cluster binding. Residues 115-117 (YVN) and serine 132 contribute to the iminosuccinate site. Cysteine 175 is a [4Fe-4S] cluster binding site. Iminosuccinate-binding positions include 201-203 (HPE) and threonine 222. Cysteine 267 contributes to the [4Fe-4S] cluster binding site.

This sequence belongs to the quinolinate synthase family. Type 2 subfamily. [4Fe-4S] cluster serves as cofactor.

It is found in the cytoplasm. The catalysed reaction is iminosuccinate + dihydroxyacetone phosphate = quinolinate + phosphate + 2 H2O + H(+). The protein operates within cofactor biosynthesis; NAD(+) biosynthesis; quinolinate from iminoaspartate: step 1/1. Catalyzes the condensation of iminoaspartate with dihydroxyacetone phosphate to form quinolinate. In Thermus thermophilus (strain ATCC 27634 / DSM 579 / HB8), this protein is Quinolinate synthase.